We begin with the raw amino-acid sequence, 508 residues long: CUGBP Elav-like family member 2 (508 aa).

Necessary for RNA-binding, TNNT2 exon 5 and NMDA R1 exon 21 inclusion regions lie at residues methionine 1 to leucine 283 and leucine 357 to tyrosine 508. RRM domains lie at isoleucine 40–serine 123, arginine 132–threonine 212, and alanine 423–serine 501.

It belongs to the CELF/BRUNOL family. Interacts with A1CF. In terms of tissue distribution, expressed in frontal cortex. Isoform 1 is expressed in brain and lung. Isoform 2 is expressed in heart, brain, placenta, lung, liver, kidney, skeletal muscle and pancreas. Isoform 4 is expressed in heart, lung, skeletal muscle, kidney and pancreas.

Its subcellular location is the nucleus. It localises to the cytoplasm. In terms of biological role, RNA-binding protein implicated in the regulation of several post-transcriptional events. Involved in pre-mRNA alternative splicing, mRNA translation and stability. Mediates exon inclusion and/or exclusion in pre-mRNA that are subject to tissue-specific and developmentally regulated alternative splicing. Specifically activates exon 5 inclusion of TNNT2 in embryonic, but not adult, skeletal muscle. Activates TNNT2 exon 5 inclusion by antagonizing the repressive effect of PTB. Acts both as an activator and as a repressor of a pair of coregulated exons: promotes inclusion of the smooth muscle (SM) exon but exclusion of the non-muscle (NM) exon in actinin pre-mRNAs. Promotes inclusion of exonS 21 and exclusion of exon 5 of the NMDA receptor R1 pre-mRNA. Involved in the apoB RNA editing activity. Increases COX2 mRNA stability and inhibits COX2 mRNA translation in epithelial cells after radiation injury. Modulates the cellular apoptosis program by regulating COX2-mediated prostaglandin E2 (PGE2) expression. Binds to (CUG)n triplet repeats in the 3'-UTR of transcripts such as DMPK. Binds to the muscle-specific splicing enhancer (MSE) intronic sites flanking the TNNT2 alternative exon 5. Binds preferentially to UG-rich sequences, in particular UG repeat and UGUU motifs. Binds to apoB mRNA, specifically to AU-rich sequences located immediately upstream of the edited cytidine. Binds AU-rich sequences in the 3'-UTR of COX2 mRNA. Binds to an intronic RNA element responsible for the silencing of exon 21 splicing. Binds to (CUG)n repeats. May be a specific regulator of miRNA biogenesis. Binds to primary microRNA pri-MIR140 and, with CELF1, negatively regulates the processing to mature miRNA. This Homo sapiens (Human) protein is CUGBP Elav-like family member 2 (CELF2).